Here is a 525-residue protein sequence, read N- to C-terminus: MSDPVIKRALVSVSDKTGIVDFCRELGAMGVEIFSTGGTLRILQESGIEAASISTITGFPEIMDGRVKTLHPKIHGGLLAVRDNEDHVGQAKANGIEFIDMVVVNLYPFEATVAKPDVTFEEAIENIDIGGPSMLRSAAKNNESVTVVTDSADYATVLDEMRSNNGATRRETRLTLARKVFELTSRYDRAIADYLIGAEESGETEAPAAISVKLEKELDMRYGENPHQSAGFYRLVDGQGSRCFDDFFDKLHGKELSYNNMLDIAAATGLVEEFRGEDPAVVIIKHTNPCGVAQAGTLVDAYRKAFSTDTQSPFGGIIAFNVPLDMETALAVDEIFTEILIAPAYEDGVLDMLMKKKNRRLVLQKKALLQEVMEYKSTQFGMLVQDRDSKIVSREDLKVVTKRQPDEQELDDMMFAWKIAKHVKSNTIVYVKNGQTIGVGAGQMSRIDSAKIARSKAAEAGLDIKGSAVASDAFFPFADGLLAAAEAGATSVIQPGGSIRDDEVIAAADENNLAMVFTSMRHFKH.

The region spanning 1 to 149 (MSDPVIKRAL…KNNESVTVVT (149 aa)) is the MGS-like domain.

Belongs to the PurH family.

It catalyses the reaction (6R)-10-formyltetrahydrofolate + 5-amino-1-(5-phospho-beta-D-ribosyl)imidazole-4-carboxamide = 5-formamido-1-(5-phospho-D-ribosyl)imidazole-4-carboxamide + (6S)-5,6,7,8-tetrahydrofolate. The enzyme catalyses IMP + H2O = 5-formamido-1-(5-phospho-D-ribosyl)imidazole-4-carboxamide. It functions in the pathway purine metabolism; IMP biosynthesis via de novo pathway; 5-formamido-1-(5-phospho-D-ribosyl)imidazole-4-carboxamide from 5-amino-1-(5-phospho-D-ribosyl)imidazole-4-carboxamide (10-formyl THF route): step 1/1. Its pathway is purine metabolism; IMP biosynthesis via de novo pathway; IMP from 5-formamido-1-(5-phospho-D-ribosyl)imidazole-4-carboxamide: step 1/1. The polypeptide is Bifunctional purine biosynthesis protein PurH (Prosthecochloris aestuarii (strain DSM 271 / SK 413)).